The sequence spans 616 residues: Chaperone protein HscA (616 aa).

The protein belongs to the heat shock protein 70 family.

Functionally, chaperone involved in the maturation of iron-sulfur cluster-containing proteins. Has a low intrinsic ATPase activity which is markedly stimulated by HscB. Involved in the maturation of IscU. The sequence is that of Chaperone protein HscA from Edwardsiella ictaluri (strain 93-146).